We begin with the raw amino-acid sequence, 318 residues long: Pantothenate kinase (318 aa).

ATP is bound at residue G96–S103.

This sequence belongs to the prokaryotic pantothenate kinase family.

It localises to the cytoplasm. It catalyses the reaction (R)-pantothenate + ATP = (R)-4'-phosphopantothenate + ADP + H(+). It participates in cofactor biosynthesis; coenzyme A biosynthesis; CoA from (R)-pantothenate: step 1/5. This Rhodopseudomonas palustris (strain BisA53) protein is Pantothenate kinase.